Here is a 360-residue protein sequence, read N- to C-terminus: Aspartate beta-hydroxylase domain-containing protein 1 (360 aa).

Topologically, residues 1–45 (MWKGGNQEAVIEGSGGELGVPGSWGLQDAACHLARASLPIMFPWP) are cytoplasmic. The helical transmembrane segment at 46–68 (LPLGSSALTMLLGALTSLFLWYC) threads the bilayer. The Lumenal segment spans residues 69-360 (YRLGSQDMQA…ALDFVFAPDP (292 aa)).

Belongs to the aspartyl/asparaginyl beta-hydroxylase family.

It is found in the membrane. The sequence is that of Aspartate beta-hydroxylase domain-containing protein 1 (Asphd1) from Mus musculus (Mouse).